Reading from the N-terminus, the 485-residue chain is Ribulose bisphosphate carboxylase large chain 2 (485 aa).

Residues N125 and T175 each contribute to the substrate site. The active-site Proton acceptor is the K177. Residue K179 participates in substrate binding. The Mg(2+) site is built by K203, D205, and E206. K203 carries the N6-carboxylysine modification. Residue H295 is the Proton acceptor of the active site. 3 residues coordinate substrate: R296, H328, and S380.

Belongs to the RuBisCO large chain family. Type I subfamily. In terms of assembly, heterohexadecamer of 8 large chains and 8 small chains. Mg(2+) is required as a cofactor.

The enzyme catalyses 2 (2R)-3-phosphoglycerate + 2 H(+) = D-ribulose 1,5-bisphosphate + CO2 + H2O. It catalyses the reaction D-ribulose 1,5-bisphosphate + O2 = 2-phosphoglycolate + (2R)-3-phosphoglycerate + 2 H(+). Functionally, ruBisCO catalyzes two reactions: the carboxylation of D-ribulose 1,5-bisphosphate, the primary event in carbon dioxide fixation, as well as the oxidative fragmentation of the pentose substrate. Both reactions occur simultaneously and in competition at the same active site. The sequence is that of Ribulose bisphosphate carboxylase large chain 2 from Methylibium petroleiphilum (strain ATCC BAA-1232 / LMG 22953 / PM1).